A 323-amino-acid chain; its full sequence is Acetyl-coenzyme A carboxylase carboxyl transferase subunit alpha (323 aa).

Residues 40-293 (LAEKSLQLTK…RKALAESLKT (254 aa)) enclose the CoA carboxyltransferase C-terminal domain.

It belongs to the AccA family. In terms of assembly, acetyl-CoA carboxylase is a heterohexamer composed of biotin carboxyl carrier protein (AccB), biotin carboxylase (AccC) and two subunits each of ACCase subunit alpha (AccA) and ACCase subunit beta (AccD).

It is found in the cytoplasm. It catalyses the reaction N(6)-carboxybiotinyl-L-lysyl-[protein] + acetyl-CoA = N(6)-biotinyl-L-lysyl-[protein] + malonyl-CoA. The protein operates within lipid metabolism; malonyl-CoA biosynthesis; malonyl-CoA from acetyl-CoA: step 1/1. Its function is as follows. Component of the acetyl coenzyme A carboxylase (ACC) complex. First, biotin carboxylase catalyzes the carboxylation of biotin on its carrier protein (BCCP) and then the CO(2) group is transferred by the carboxyltransferase to acetyl-CoA to form malonyl-CoA. The chain is Acetyl-coenzyme A carboxylase carboxyl transferase subunit alpha from Polynucleobacter necessarius subsp. necessarius (strain STIR1).